We begin with the raw amino-acid sequence, 638 residues long: DNA repair protein rhp41 (638 aa).

This sequence belongs to the XPC family.

It localises to the nucleus. Has a role in the nucleotide excision repair (NER) pathway. Acts in both transcription-coupled repair (TCR) which removes damage from the transcribed strand of active genes and in global genome repair (GGR) which removes damage in untranscribed DNA. Involved in the repair of UV-induced damages where it is involved in the removal of cyclobutane pyrimidine dimers (CPDs). This is DNA repair protein rhp41 (rhp41) from Schizosaccharomyces pombe (strain 972 / ATCC 24843) (Fission yeast).